The primary structure comprises 105 residues: Nucleoid-associated protein EAT1b_1710 (105 aa).

The segment covering 1–16 has biased composition (low complexity); it reads MRGMGNMNNMMKQMQK. The segment at 1-26 is disordered; it reads MRGMGNMNNMMKQMQKMQKDMAKAQE. Residues 17–26 show a composition bias toward basic and acidic residues; sequence MQKDMAKAQE.

It belongs to the YbaB/EbfC family. Homodimer.

Its subcellular location is the cytoplasm. The protein localises to the nucleoid. Binds to DNA and alters its conformation. May be involved in regulation of gene expression, nucleoid organization and DNA protection. The polypeptide is Nucleoid-associated protein EAT1b_1710 (Exiguobacterium sp. (strain ATCC BAA-1283 / AT1b)).